The chain runs to 989 residues: DNA-binding protein SMUBP-2 (989 aa).

An N-acetylalanine modification is found at Ala2. ATP is bound by residues 213–220 (GPPGTGKT), Gln402, Tyr441, and Glu570. Residues 637-783 (TAFEYLDDIV…KARHITVSRK (147 aa)) form an SS DNA-binding region. Disordered regions lie at residues 650–717 (YTHE…GCDR), 765–818 (LRHD…GQPH), and 833–869 (LQRQ…TKGP). A compositionally biased stretch (low complexity) spans 677-690 (EQENGQEARAAAGQ). The region spanning 721 to 784 (IDRTEHFRAM…ARHITVSRKS (64 aa)) is the R3H domain. Positions 765-775 (LRHDSTGEGKA) are enriched in basic and acidic residues. A phosphoserine mark is found at Ser797 and Ser800. A compositionally biased stretch (low complexity) spans 833 to 842 (LQRQQGSQAQ). Residues 860-864 (KKKKK) carry the Nuclear localization signal motif. An AN1-type zinc finger spans residues 885–934 (IKADNTCSFAKCTASTTTLGQFCMHCSRRYCLSHHLPEIHGCGEKARAHA). Cys891, Cys896, Cys907, Cys910, Cys915, His918, His924, and Cys926 together coordinate Zn(2+). Basic and acidic residues predominate over residues 954–972 (ALDPAKRAQLQRRLDKKLG). Positions 954–989 (ALDPAKRAQLQRRLDKKLGELSSQRTSKRKEKERGT) are disordered.

It belongs to the DNA2/NAM7 helicase family. As to quaternary structure, homooligomer. Interacts with RUVBL1. Interacts with RUVBL2. Interacts with GTF3C1. Interacts with ABT1. Interacts with ribosomes. High expression in brain and testis, moderate in heart, spleen, and kidney, and low in other tissues.

The protein resides in the nucleus. It is found in the cytoplasm. Its subcellular location is the cell projection. The protein localises to the axon. It carries out the reaction ATP + H2O = ADP + phosphate + H(+). Functionally, 5' to 3' helicase that unwinds RNA and DNA duplexes in an ATP-dependent reaction. Specific to 5'-phosphorylated single-stranded guanine-rich sequences. May play a role in RNA metabolism, ribosome biogenesis or initiation of translation. May play a role in regulation of transcription. Interacts with tRNA-Tyr. In Mesocricetus auratus (Golden hamster), this protein is DNA-binding protein SMUBP-2 (IGHMBP2).